A 195-amino-acid polypeptide reads, in one-letter code: Imidazoleglycerol-phosphate dehydratase (195 aa).

The protein belongs to the imidazoleglycerol-phosphate dehydratase family.

It is found in the cytoplasm. It catalyses the reaction D-erythro-1-(imidazol-4-yl)glycerol 3-phosphate = 3-(imidazol-4-yl)-2-oxopropyl phosphate + H2O. It functions in the pathway amino-acid biosynthesis; L-histidine biosynthesis; L-histidine from 5-phospho-alpha-D-ribose 1-diphosphate: step 6/9. In Haloarcula marismortui (strain ATCC 43049 / DSM 3752 / JCM 8966 / VKM B-1809) (Halobacterium marismortui), this protein is Imidazoleglycerol-phosphate dehydratase.